A 1063-amino-acid chain; its full sequence is ATP-dependent helicase hrq1 (1063 aa).

Positions 224 to 243 are disordered; it reads TQSRKNQPVPPDSPSIPNDS. The Helicase ATP-binding domain maps to 320-503; sequence INHLWNGFHV…KIFGVDNIKL (184 aa). 333-340 contacts ATP; it reads TSTSSGKS. The short motif at 444 to 447 is the DEAH box element; sequence DEAH. Residues 539-717 enclose the Helicase C-terminal domain; that stretch reads EASKLLIKFA…ELPINIRSDE (179 aa).

It belongs to the helicase family. HRQ1 subfamily. Forms heptamer rings. Interacts with rhp14. It depends on Mg(2+) as a cofactor.

It is found in the nucleus. The catalysed reaction is Couples ATP hydrolysis with the unwinding of duplex DNA by translocating in the 3'-5' direction.. It catalyses the reaction ATP + H2O = ADP + phosphate + H(+). In terms of biological role, helicase with 3'-5' helicase activity involved in genome stability. Functions in the nucleotide excision repair (NER) pathway and plays a critical role in DNA interstrand cross-link repair. Unwinds relatively long duplex DNA up to 120-bp and requires a long 3'-tail of at least 70 nucleotides for efficient unwinding of duplex DNA. Shows both processive helicase and DNA strand annealing activities. Affects telomere length by a non-catalytic mechanism, probably through inhibiting telomerase by competing with it for ssDNA binding. This Schizosaccharomyces pombe (strain 972 / ATCC 24843) (Fission yeast) protein is ATP-dependent helicase hrq1.